The primary structure comprises 116 residues: Iron-sulfur cluster insertion protein ErpA (116 aa).

Iron-sulfur cluster-binding residues include C44, C108, and C110.

Belongs to the HesB/IscA family. In terms of assembly, homodimer. Requires iron-sulfur cluster as cofactor.

Functionally, required for insertion of 4Fe-4S clusters for at least IspG. The protein is Iron-sulfur cluster insertion protein ErpA of Ectopseudomonas mendocina (strain ymp) (Pseudomonas mendocina).